A 286-amino-acid polypeptide reads, in one-letter code: DNA-directed RNA polymerase subunit Rpo3 (286 aa).

Belongs to the archaeal Rpo3/eukaryotic RPB3 RNA polymerase subunit family. As to quaternary structure, part of the RNA polymerase complex.

The protein resides in the cytoplasm. It catalyses the reaction RNA(n) + a ribonucleoside 5'-triphosphate = RNA(n+1) + diphosphate. DNA-dependent RNA polymerase (RNAP) catalyzes the transcription of DNA into RNA using the four ribonucleoside triphosphates as substrates. This chain is DNA-directed RNA polymerase subunit Rpo3, found in Aeropyrum pernix (strain ATCC 700893 / DSM 11879 / JCM 9820 / NBRC 100138 / K1).